The chain runs to 231 residues: Ribonuclease 3 (231 aa).

Residues 7–135 (IQAIESKLNF…ILGAVYLDGG (129 aa)) enclose the RNase III domain. Residue E48 coordinates Mg(2+). Residue D52 is part of the active site. The Mg(2+) site is built by N121 and E124. E124 is an active-site residue. The 70-residue stretch at 160–229 (NPKNRLQQFT…AKQALSTHDN (70 aa)) folds into the DRBM domain.

The protein belongs to the ribonuclease III family. Homodimer. The cofactor is Mg(2+).

The protein localises to the cytoplasm. The enzyme catalyses Endonucleolytic cleavage to 5'-phosphomonoester.. Functionally, digests double-stranded RNA. Involved in the processing of primary rRNA transcript to yield the immediate precursors to the large and small rRNAs (23S and 16S). Processes some mRNAs, and tRNAs when they are encoded in the rRNA operon. Processes pre-crRNA and tracrRNA of type II CRISPR loci if present in the organism. This Chlamydia trachomatis serovar A (strain ATCC VR-571B / DSM 19440 / HAR-13) protein is Ribonuclease 3.